The sequence spans 350 residues: MPVLHNRISNDALKAKMLAESEPRTTISFYKYFHIADPKVTRDALYQLFTALNVFGRVYLAHEGINAQISVPASNVETFRAQLYDFDPALEGLRLNIALDDDGKSFWVLRMKVRDRIVADGIDDPHFDASNVGEYLQAAEVNAMLDDPDALFIDMRNHYEYEVGHFENALEIPADTFREQLPKAVEMMQAHKDKKIVMYCTGGIRCEKASAWMKHNGFNKVWHIEGGIIEYARKAREQGLPVRFIGKNFVFDERMGERISDEIIAHCHQCGAPCDSHTNCKNDGCHLLFIQCPVCAEKYKGCCSEICCEESALPPEEQRRRRAGRENGNKIFNKSRGRLNTTLGIPDPTE.

The Rhodanese domain occupies 146 to 240 (DDPDALFIDM…YARKAREQGL (95 aa)). Cysteine 200 serves as the catalytic Cysteine persulfide intermediate.

Belongs to the TrhO family.

The catalysed reaction is uridine(34) in tRNA + AH2 + O2 = 5-hydroxyuridine(34) in tRNA + A + H2O. Functionally, catalyzes oxygen-dependent 5-hydroxyuridine (ho5U) modification at position 34 in tRNAs, the first step in 5-carboxymethoxyuridine (cmo5U) biosynthesis. May be part of an alternate pathway, which is able to bypass cmo5U biogenesis in a subset of tRNAs under aerobic conditions. The sequence is that of tRNA uridine(34) hydroxylase from Escherichia coli (strain SE11).